Reading from the N-terminus, the 145-residue chain is Nucleoside diphosphate kinase (145 aa).

Residues lysine 11, phenylalanine 59, arginine 87, threonine 93, arginine 104, and asparagine 114 each contribute to the ATP site. Histidine 117 functions as the Pros-phosphohistidine intermediate in the catalytic mechanism.

This sequence belongs to the NDK family. The cofactor is Mg(2+).

The protein resides in the cytoplasm. The catalysed reaction is a 2'-deoxyribonucleoside 5'-diphosphate + ATP = a 2'-deoxyribonucleoside 5'-triphosphate + ADP. It catalyses the reaction a ribonucleoside 5'-diphosphate + ATP = a ribonucleoside 5'-triphosphate + ADP. Its function is as follows. Major role in the synthesis of nucleoside triphosphates other than ATP. The ATP gamma phosphate is transferred to the NDP beta phosphate via a ping-pong mechanism, using a phosphorylated active-site intermediate. This chain is Nucleoside diphosphate kinase, found in Sulfolobus acidocaldarius (strain ATCC 33909 / DSM 639 / JCM 8929 / NBRC 15157 / NCIMB 11770).